Here is a 684-residue protein sequence, read N- to C-terminus: Leishmanolysin-like peptidase (684 aa).

His257 contributes to the Zn(2+) binding site. Residue Glu258 is part of the active site. Zn(2+) contacts are provided by His261 and His364.

It belongs to the peptidase M8 family. The cofactor is Zn(2+).

It is found in the cytoplasm. In terms of biological role, essential for the coordination of mitotic progression, and also plays a role in cell migration. The sequence is that of Leishmanolysin-like peptidase from Drosophila pseudoobscura pseudoobscura (Fruit fly).